The chain runs to 287 residues: Glutamate racemase (287 aa).

Substrate contacts are provided by residues 32–33 and 64–65; these read DS and YG. The Proton donor/acceptor role is filled by C96. 97–98 contributes to the substrate binding site; sequence NT. C208 (proton donor/acceptor) is an active-site residue. Residue 209–210 coordinates substrate; the sequence is TH.

This sequence belongs to the aspartate/glutamate racemases family.

The catalysed reaction is L-glutamate = D-glutamate. Its pathway is cell wall biogenesis; peptidoglycan biosynthesis. Provides the (R)-glutamate required for cell wall biosynthesis. This Yersinia enterocolitica serotype O:8 / biotype 1B (strain NCTC 13174 / 8081) protein is Glutamate racemase.